Consider the following 409-residue polypeptide: MGEKPGTRVFKKSSPNCKLTVYLGKRDFVDHLDKVDPVDGVVLVDPDYLKDRKVFVTLTCAFRYGREDLDVLGLSFRKDLFIATYQAFPPVPNPPRPPTRLQDRLLRKLGQHAHPFFFTIPQNLPCSVTLQPGPEDTGKACGVDFEIRAFCAKSLEEKSHKRNSVRLVIRKVQFAPEKPGPQPSAETTRHFLMSDRSLHLEASLDKELYYHGEPLNVNVHVTNNSTKTVKKIKVSVRQYADICLFSTAQYKCPVAQLEQDDQVSPSSTFCKVYTITPLLSDNREKRGLALDGKLKHEDTNLASSTIVKEGANKEVLGILVSYRVKVKLVVSRGGDVSVELPFVLMHPKPHDHIPLPRPQSAAPETDVPVDTNLIEFDTNYATDDDIVFEDFARLRLKGMKDDDYDDQLC.

A Phosphotyrosine modification is found at tyrosine 48. 2 positions are modified to hydroxyproline; by PHD2: proline 176 and proline 181. Residues 240 to 409 form an interaction with TRAF6 region; it reads ADICLFSTAQ…KDDDYDDQLC (170 aa). Residue serine 360 is modified to Phosphoserine. The segment at 363 to 409 is interaction with AP2B1; sequence PETDVPVDTNLIEFDTNYATDDDIVFEDFARLRLKGMKDDDYDDQLC. Position 382 is a phosphothreonine (threonine 382). Positions 385–395 match the [DE]-X(1,2)-F-X-X-[FL]-X-X-X-R motif motif; it reads DIVFEDFARLR.

The protein belongs to the arrestin family. As to quaternary structure, homooligomer; the self-association is mediated by InsP6-binding. Heterooligomer with ARRB1; the association is mediated by InsP6-binding. Interacts with ADRB2 and CHRM2. Interacts with PDE4A. Interacts with PDE4D. Interacts with MAPK10, MAPK1 and MAPK3. Interacts with DRD2. Interacts with FSHR. Interacts with CLTC. Interacts with HTR2C. Interacts with CCR5. Interacts with CXCR4. Interacts with SRC. Interacts with DUSP16; the interaction is interrupted by stimulation of AGTR1 and activation of MAPK10. Interacts with CHUK; the interaction is enhanced stimulation of ADRB2. Interacts with RELA. Interacts with MDM2; the interaction is enhanced by activation of GPCRs. Interacts with SLC9A5. Interacts with TRAF6. Interacts with IGF1R. Interacts with ENG. Interacts with KIR2DL1, KIR2DL3 and KIR2DL4. Interacts with LDLR. Interacts with AP2B1. Interacts with C5AR1. Interacts with RAF1. Interacts with MAP2K1. Interacts with MAPK1. Interacts with MAPK10; the interaction enhances MAPK10 activation by MAP3K5. Interacts with MAP2K4; the interaction is enhanced by presence of MAP3K5 and MAPK10. Interacts with MAP3K5. Interacts with AKT1. Interacts with IKBKB and MAP3K14. Interacts with SMO (activated). Interacts with GSK3A and GSK3B. Associates with protein phosphatase 2A (PP2A). Interacts with DHX8; the interaction is detected in the nucleus upon OR1D2 stimulation. Interacts with GAPDHS; the interaction is detected in the nucleus upon OR1D2 stimulation. Interacts with H2AFX; the interaction is detected in the nucleus upon OR1D2 stimulation. Interacts with KIF14; the interaction is detected in the nucleus upon OR1D2 stimulation. Interacts with RCC1; the interaction is detected in the nucleus upon OR1D2 stimulation. Interacts with CXCR4; the interaction is dependent on C-terminal phosphorylation of CXCR4 and allows activation of MAPK1 and MAPK3. Interacts with GPR143. Interacts with HCK and CXCR1 (phosphorylated). Interacts with ACKR3 and ACKR4. Interacts with ARRDC1; the interaction is direct. Interacts with GPR61, GPR62 and GPR135. Interacts (via NACHT and LRR domains) with NLRP3; this interaction is direct and inducible by omega-3 polyunsaturated fatty acids (PUFAs). Interacts with FFAR4 (via C-terminus); this interaction is stimulated by long-chain fatty acids (LCFAs). Interacts with GPR35. Interacts with GPR84. Interacts with TIGIT; this interaction inhibits the NF-kappa-B pathway. Interacts with TGFBR3. Phosphorylated at Thr-382 in the cytoplasm; probably dephosphorylated at the plasma membrane. The phosphorylation does not regulate internalization and recycling of ADRB2, interaction with clathrin or AP2B1. In terms of processing, the ubiquitination status appears to regulate the formation and trafficking of beta-arrestin-GPCR complexes and signaling. Ubiquitination appears to occur GPCR-specific. Ubiquitinated by MDM2; the ubiquitination is required for rapid internalization of ADRB2. Deubiquitinated by USP33; the deubiquitination leads to a dissociation of the beta-arrestin-GPCR complex. Stimulation of a class A GPCR, such as ADRB2, induces transient ubiquitination and subsequently promotes association with USP33. Stimulation of a class B GPCR promotes a sustained ubiquitination. Deubiquitinated by USP20; allowing USP20 to deubiquitinate TRAF6 leading to inhibition of NF-kappa-B signaling. Post-translationally, hydroxylation by PHD2 modulates the rate of internalization by slowing down recruitment to the plasma membrane and inhibiting subsequent co-internalization with class A receptors.

It is found in the cytoplasm. It localises to the nucleus. Its subcellular location is the cell membrane. The protein resides in the membrane. The protein localises to the clathrin-coated pit. It is found in the cytoplasmic vesicle. Functionally, functions in regulating agonist-mediated G-protein coupled receptor (GPCR) signaling by mediating both receptor desensitization and resensitization processes. During homologous desensitization, beta-arrestins bind to the GPRK-phosphorylated receptor and sterically preclude its coupling to the cognate G-protein; the binding appears to require additional receptor determinants exposed only in the active receptor conformation. The beta-arrestins target many receptors for internalization by acting as endocytic adapters (CLASPs, clathrin-associated sorting proteins) and recruiting the GPRCs to the adapter protein 2 complex 2 (AP-2) in clathrin-coated pits (CCPs). However, the extent of beta-arrestin involvement appears to vary significantly depending on the receptor, agonist and cell type. Internalized arrestin-receptor complexes traffic to intracellular endosomes, where they remain uncoupled from G-proteins. Two different modes of arrestin-mediated internalization occur. Class A receptors, like ADRB2, OPRM1, ENDRA, D1AR and ADRA1B dissociate from beta-arrestin at or near the plasma membrane and undergo rapid recycling. Class B receptors, like AVPR2, AGTR1, NTSR1, TRHR and TACR1 internalize as a complex with arrestin and traffic with it to endosomal vesicles, presumably as desensitized receptors, for extended periods of time. Receptor resensitization then requires that receptor-bound arrestin is removed so that the receptor can be dephosphorylated and returned to the plasma membrane. Mediates endocytosis of CCR7 following ligation of CCL19 but not CCL21. Involved in internalization of P2RY1, P2RY4, P2RY6 and P2RY11 and ATP-stimulated internalization of P2RY2. Involved in phosphorylation-dependent internalization of OPRD1 and subsequent recycling or degradation. Involved in ubiquitination of IGF1R. Beta-arrestins function as multivalent adapter proteins that can switch the GPCR from a G-protein signaling mode that transmits short-lived signals from the plasma membrane via small molecule second messengers and ion channels to a beta-arrestin signaling mode that transmits a distinct set of signals that are initiated as the receptor internalizes and transits the intracellular compartment. Acts as a signaling scaffold for MAPK pathways such as MAPK1/3 (ERK1/2) and MAPK10 (JNK3). ERK1/2 and JNK3 activated by the beta-arrestin scaffold are largely excluded from the nucleus and confined to cytoplasmic locations such as endocytic vesicles, also called beta-arrestin signalosomes. Acts as a signaling scaffold for the AKT1 pathway. GPCRs for which the beta-arrestin-mediated signaling relies on both ARRB1 and ARRB2 (codependent regulation) include ADRB2, F2RL1 and PTH1R. For some GPCRs the beta-arrestin-mediated signaling relies on either ARRB1 or ARRB2 and is inhibited by the other respective beta-arrestin form (reciprocal regulation). Increases ERK1/2 signaling in AGTR1- and AVPR2-mediated activation (reciprocal regulation). Involved in CCR7-mediated ERK1/2 signaling involving ligand CCL19. Is involved in type-1A angiotensin II receptor/AGTR1-mediated ERK activity. Is involved in type-1A angiotensin II receptor/AGTR1-mediated MAPK10 activity. Is involved in dopamine-stimulated AKT1 activity in the striatum by disrupting the association of AKT1 with its negative regulator PP2A. Involved in AGTR1-mediated chemotaxis. Appears to function as signaling scaffold involved in regulation of MIP-1-beta-stimulated CCR5-dependent chemotaxis. Involved in attenuation of NF-kappa-B-dependent transcription in response to GPCR or cytokine stimulation by interacting with and stabilizing CHUK. Suppresses UV-induced NF-kappa-B-dependent activation by interacting with CHUK. The function is promoted by stimulation of ADRB2 and dephosphorylation of ARRB2. Involved in p53/TP53-mediated apoptosis by regulating MDM2 and reducing the MDM2-mediated degradation of p53/TP53. May serve as nuclear messenger for GPCRs. Upon stimulation of OR1D2, may be involved in regulation of gene expression during the early processes of fertilization. Also involved in regulation of receptors other than GPCRs. Involved in endocytosis of TGFBR2 and TGFBR3 and down-regulates TGF-beta signaling such as NF-kappa-B activation. Involved in endocytosis of low-density lipoprotein receptor/LDLR. Involved in endocytosis of smoothened homolog/Smo, which also requires GRK2. Involved in endocytosis of SLC9A5. Involved in endocytosis of ENG and subsequent TGF-beta-mediated ERK activation and migration of epithelial cells. Involved in Toll-like receptor and IL-1 receptor signaling through the interaction with TRAF6 which prevents TRAF6 autoubiquitination and oligomerization required for activation of NF-kappa-B and JUN. Involved in insulin resistance by acting as insulin-induced signaling scaffold for SRC, AKT1 and INSR. Involved in regulation of inhibitory signaling of natural killer cells by recruiting PTPN6 and PTPN11 to KIR2DL1. Involved in IL8-mediated granule release in neutrophils. Involved in the internalization of the atypical chemokine receptor ACKR3. Acts as an adapter protein coupling FFAR4 receptor to specific downstream signaling pathways, as well as mediating receptor endocytosis. During the activation step of NLRP3 inflammasome, directly associates with NLRP3 leading to inhibition of pro-inflammatory cytokine release and inhibition of inflammation. The polypeptide is Beta-arrestin-2 (ARRB2) (Homo sapiens (Human)).